A 316-amino-acid chain; its full sequence is Beta-agarase (316 aa).

An N-terminal signal peptide occupies residues 1-18; that stretch reads MKRKLFTICLASLQFACA. One can recognise a GH16 domain in the interval 27-315; the sequence is YEWDIYPVPA…WIRVYTLVPE (289 aa). Substrate contacts are provided by residues tryptophan 78, 87 to 97, and 101 to 103; these read QRDHVSVSDGF and RAS. Glutamate 167 serves as the catalytic Nucleophile. Glutamate 172 functions as the Proton donor in the catalytic mechanism. Residue arginine 197 participates in substrate binding.

The protein belongs to the glycosyl hydrolase 16 family.

It catalyses the reaction Hydrolysis of (1-&gt;4)-beta-D-galactosidic linkages in agarose, giving the tetramer as the predominant product.. In terms of biological role, cleaves the beta-1,4-linkages between beta-D-galactose and alpha-L-3,6-anhydro-galactose residues in agarose. Cleaves agarose in a random manner with retention of the anomeric-bond configuration, producing beta-anomers that give rise progressively to alpha-anomers when mutarotation takes place. In Phocaeicola plebeius (strain DSM 17135 / JCM 12973 / CCUG 54634 / M2) (Bacteroides plebeius), this protein is Beta-agarase.